Here is a 229-residue protein sequence, read N- to C-terminus: Large ribosomal subunit protein uL1 (229 aa).

It belongs to the universal ribosomal protein uL1 family. As to quaternary structure, part of the 50S ribosomal subunit.

Its function is as follows. Binds directly to 23S rRNA. The L1 stalk is quite mobile in the ribosome, and is involved in E site tRNA release. Protein L1 is also a translational repressor protein, it controls the translation of the L11 operon by binding to its mRNA. This Actinobacillus pleuropneumoniae serotype 5b (strain L20) protein is Large ribosomal subunit protein uL1.